The chain runs to 436 residues: GTPase Der (436 aa).

2 consecutive EngA-type G domains span residues 4–167 and 175–351; these read PTVA…PTEV and IRFS…ESQN. GTP-binding positions include 10-17, 57-61, 119-122, 181-188, 229-233, and 294-297; these read GRPNVGKS, DTGGI, NKVD, DTAGM, and NKWD. A KH-like domain is found at 352–436; that stretch reads RRISSAVLND…PIHLIARKRK (85 aa).

It belongs to the TRAFAC class TrmE-Era-EngA-EngB-Septin-like GTPase superfamily. EngA (Der) GTPase family. In terms of assembly, associates with the 50S ribosomal subunit.

Functionally, GTPase that plays an essential role in the late steps of ribosome biogenesis. This Streptococcus thermophilus (strain ATCC BAA-491 / LMD-9) protein is GTPase Der.